The following is a 519-amino-acid chain: Methionine--tRNA ligase (519 aa).

The 'HIGH' region motif lies at Ala11–His21. A 'KMSKS' region motif is present at residues Lys299–Ser303. Lys302 contributes to the ATP binding site. Residues Leu500–Lys519 are disordered.

Belongs to the class-I aminoacyl-tRNA synthetase family. MetG type 2B subfamily. In terms of assembly, monomer.

It is found in the cytoplasm. It catalyses the reaction tRNA(Met) + L-methionine + ATP = L-methionyl-tRNA(Met) + AMP + diphosphate. In terms of biological role, is required not only for elongation of protein synthesis but also for the initiation of all mRNA translation through initiator tRNA(fMet) aminoacylation. The protein is Methionine--tRNA ligase (metG) of Mycobacterium tuberculosis (strain CDC 1551 / Oshkosh).